The sequence spans 140 residues: Hemoglobin subunit beta (140 aa).

Residues 1-140 (GSDLVSGFWG…VGDALAKAYH (140 aa)) form the Globin domain. H57 and H86 together coordinate heme b.

This sequence belongs to the globin family. As to quaternary structure, heterotetramer of two alpha chains and two beta chains. Red blood cells.

Involved in oxygen transport from the lung to the various peripheral tissues. The protein is Hemoglobin subunit beta (HBB) of Pelophylax lessonae (Pool frog).